The sequence spans 114 residues: Type 4 adapter protein IcmS (114 aa).

As to quaternary structure, the T4BSS is a complex nanomachine composed of several subcomplexes. This subunit is part of the Type IV Coupling Complex (T4CC), a subcomplex composed of the DotLMNYZ core and the IcmSW-LvgA adapter subunits, linked by the C-terminal tail of DotL. Interacts with IcmW. IcmS and IcmW form a stable complex. Interacts directly with the type 4 coupling protein DotL. Interacts with LvgA. Interacts with effector proteins.

The protein resides in the cytoplasm. With respect to regulation, interaction with DotL is critical for the export of IcmSW-dependent substrates. Its function is as follows. Component of the Dot/Icm type IVB secretion system (T4BSS), which is used to inject bacterial effector proteins into eukaryotic host cells. Part of a subcomplex which recruits effector proteins and delivers them to the core transmembrane subcomplex. The IcmS/IcmW protein complex plays an important role in protein translocation by interacting with multiple Dot/Icm effector proteins to facilitate their translocation into host cells. Interaction promotes conformational changes in the effector protein, which may facilitate display of a C-terminal translocation signal. May maintain the substrates in a translocation competent form. Required for intracellular growth in host cells, replicative phagosome formation and phagosome trafficking. IcmS is required for IcmW stability. This chain is Type 4 adapter protein IcmS, found in Legionella pneumophila subsp. pneumophila (strain Philadelphia 1 / ATCC 33152 / DSM 7513).